Reading from the N-terminus, the 326-residue chain is 3-oxopimeloyl-[acyl-carrier-protein] synthase (326 aa).

Catalysis depends on residues Cys-115 and His-253. The ACP-binding stretch occupies residues 254-258 (QANIR). Residue Asn-283 is part of the active site.

It belongs to the thiolase-like superfamily. BioZ family.

It carries out the reaction malonyl-[ACP] + an acyl-CoA + H(+) = a 3-oxoacyl-[ACP] + CO2 + CoA. It catalyses the reaction glutaryl-CoA + malonyl-[ACP] + H(+) = 3-oxo-6-carboxyhexanoyl-[ACP] + CO2 + CoA. It functions in the pathway cofactor biosynthesis; biotin biosynthesis. Involved in the formation of the biotin precursor pimeloyl-ACP. Catalyzes the condensation of glutaryl-CoA, an intermediate in lysine degradation, with malonyl-ACP to produce 3-oxopimeloyl-ACP. This chain is 3-oxopimeloyl-[acyl-carrier-protein] synthase, found in Brucella abortus (strain 2308).